A 284-amino-acid polypeptide reads, in one-letter code: Nucleotide-binding protein VF_0384 (284 aa).

8–15 (GSSGAGKS) contributes to the ATP binding site. Residue 56 to 59 (DIRN) participates in GTP binding.

Belongs to the RapZ-like family.

Displays ATPase and GTPase activities. In Aliivibrio fischeri (strain ATCC 700601 / ES114) (Vibrio fischeri), this protein is Nucleotide-binding protein VF_0384.